Reading from the N-terminus, the 883-residue chain is Probable pre-mRNA-splicing factor ATP-dependent RNA helicase DEAH8 (883 aa).

A Helicase ATP-binding domain is found at 232–395; the sequence is LKLIEENQVL…FDSARIYLIP (164 aa). ATP is bound at residue 245–252; that stretch reads GETGSGKT. Residues 342 to 345 carry the DEAH box motif; it reads DEAH. Residues 416–589 enclose the Helicase C-terminal domain; sequence TVIRTVVQIH…SVVLTLKSLG (174 aa). Positions 845 to 883 are disordered; it reads EDTRPKKTQRRIEEASTSKVDTNKKTRTSKVDTNKKSKR.

Belongs to the DEAD box helicase family. DEAH subfamily. PRP2 sub-subfamily. As to expression, predominantly expressed in flowers.

The catalysed reaction is ATP + H2O = ADP + phosphate + H(+). Its function is as follows. May be involved in pre-mRNA splicing. The polypeptide is Probable pre-mRNA-splicing factor ATP-dependent RNA helicase DEAH8 (Arabidopsis thaliana (Mouse-ear cress)).